The chain runs to 189 residues: Ion-translocating oxidoreductase complex subunit B (189 aa).

Residues 1 to 26 are hydrophobic; the sequence is MSGIFIAIILLTILALLFGILLGFAA. The 59-residue stretch at 32–90 folds into the 4Fe-4S domain; sequence EGDPLVDQLEALLPQTQCGQCGYPGCRPYAEAIANGEKINLCPPGGSATMEKLAEMAGV. [4Fe-4S] cluster contacts are provided by cysteine 49, cysteine 52, cysteine 57, cysteine 73, cysteine 114, cysteine 117, cysteine 120, cysteine 124, cysteine 144, cysteine 147, cysteine 150, and cysteine 154. 4Fe-4S ferredoxin-type domains lie at 105–134 and 135–164; these read KVAY…GSGK and LMHT…MLPV.

The protein belongs to the 4Fe4S bacterial-type ferredoxin family. RnfB subfamily. In terms of assembly, the complex is composed of six subunits: RnfA, RnfB, RnfC, RnfD, RnfE and RnfG. [4Fe-4S] cluster serves as cofactor.

Its subcellular location is the cell inner membrane. Part of a membrane-bound complex that couples electron transfer with translocation of ions across the membrane. This chain is Ion-translocating oxidoreductase complex subunit B, found in Shewanella sediminis (strain HAW-EB3).